A 492-amino-acid polypeptide reads, in one-letter code: Anthranilate synthase component 1 (492 aa).

L-tryptophan-binding positions include Ser48 and 273–275 (PYM). 308–309 (GT) serves as a coordination point for chorismate. Position 335 (Glu335) interacts with Mg(2+). Chorismate contacts are provided by residues Tyr423, Arg443, 457–459 (GGG), and Gly459. Glu472 contributes to the Mg(2+) binding site.

Belongs to the anthranilate synthase component I family. As to quaternary structure, heterotetramer consisting of two non-identical subunits: a beta subunit (TrpG) and a large alpha subunit (TrpE). Mg(2+) serves as cofactor.

It carries out the reaction chorismate + L-glutamine = anthranilate + pyruvate + L-glutamate + H(+). Its pathway is amino-acid biosynthesis; L-tryptophan biosynthesis; L-tryptophan from chorismate: step 1/5. Its activity is regulated as follows. Feedback inhibited by tryptophan. In terms of biological role, part of a heterotetrameric complex that catalyzes the two-step biosynthesis of anthranilate, an intermediate in the biosynthesis of L-tryptophan. In the first step, the glutamine-binding beta subunit (TrpG) of anthranilate synthase (AS) provides the glutamine amidotransferase activity which generates ammonia as a substrate that, along with chorismate, is used in the second step, catalyzed by the large alpha subunit of AS (TrpE) to produce anthranilate. In the absence of TrpG, TrpE can synthesize anthranilate directly from chorismate and high concentrations of ammonia. This is Anthranilate synthase component 1 from Pseudomonas aeruginosa (strain ATCC 15692 / DSM 22644 / CIP 104116 / JCM 14847 / LMG 12228 / 1C / PRS 101 / PAO1).